The chain runs to 146 residues: Hemoglobin subunit beta (146 aa).

The 145-residue stretch at 2-146 (HWTAEEKSAI…VAHALAHQYH (145 aa)) folds into the Globin domain. His-63 and His-92 together coordinate heme b.

Belongs to the globin family. As to quaternary structure, heterotetramer of two alpha chains and two beta chains. Oxygenation results in dissociation to dimers. Red blood cells.

Functionally, involved in oxygen transport from the lung to the various peripheral tissues. The polypeptide is Hemoglobin subunit beta (HBB) (Erythrolamprus miliaris (South American water snake)).